Here is a 194-residue protein sequence, read N- to C-terminus: Fibroblast growth factor 7 (194 aa).

Residues 1 to 31 form the signal peptide; it reads MHKWILTWILPTLLYRSCFHIICLVGTISLA. N-linked (GlcNAc...) asparagine glycosylation is present at asparagine 45.

This sequence belongs to the heparin-binding growth factors family. As to quaternary structure, interacts with FGFBP1. Interacts with FGFR2. Affinity between fibroblast growth factors (FGFs) and their receptors is increased by heparan sulfate glycosaminoglycans that function as coreceptors. In terms of tissue distribution, epithelial cell.

Its subcellular location is the secreted. Its function is as follows. Plays an important role in the regulation of embryonic development, cell proliferation and cell differentiation. Required for normal branching morphogenesis. Growth factor active on keratinocytes. Possible major paracrine effector of normal epithelial cell proliferation. The polypeptide is Fibroblast growth factor 7 (FGF7) (Homo sapiens (Human)).